Consider the following 147-residue polypeptide: Sec-independent protein translocase protein TatB (147 aa).

The chain crosses the membrane as a helical span at residues Met-1–Gly-21. The interval Asp-67–Thr-147 is disordered. A compositionally biased stretch (basic and acidic residues) spans Ala-93–Ser-103. Low complexity-rich tracts occupy residues Ala-109–Ala-120 and Ala-129–Thr-147.

It belongs to the TatB family. The Tat system comprises two distinct complexes: a TatABC complex, containing multiple copies of TatA, TatB and TatC subunits, and a separate TatA complex, containing only TatA subunits. Substrates initially bind to the TatABC complex, which probably triggers association of the separate TatA complex to form the active translocon.

It localises to the cell inner membrane. In terms of biological role, part of the twin-arginine translocation (Tat) system that transports large folded proteins containing a characteristic twin-arginine motif in their signal peptide across membranes. Together with TatC, TatB is part of a receptor directly interacting with Tat signal peptides. TatB may form an oligomeric binding site that transiently accommodates folded Tat precursor proteins before their translocation. This Bordetella pertussis (strain Tohama I / ATCC BAA-589 / NCTC 13251) protein is Sec-independent protein translocase protein TatB.